Reading from the N-terminus, the 258-residue chain is Indole-3-glycerol phosphate synthase (258 aa).

It belongs to the TrpC family.

The catalysed reaction is 1-(2-carboxyphenylamino)-1-deoxy-D-ribulose 5-phosphate + H(+) = (1S,2R)-1-C-(indol-3-yl)glycerol 3-phosphate + CO2 + H2O. It functions in the pathway amino-acid biosynthesis; L-tryptophan biosynthesis; L-tryptophan from chorismate: step 4/5. This chain is Indole-3-glycerol phosphate synthase, found in Endomicrobium trichonymphae.